A 498-amino-acid polypeptide reads, in one-letter code: N-succinylglutamate 5-semialdehyde dehydrogenase 1 (498 aa).

231 to 236 (GSSNTG) contacts NAD(+). Residues Glu254 and Cys288 contribute to the active site.

It belongs to the aldehyde dehydrogenase family. AstD subfamily.

It catalyses the reaction N-succinyl-L-glutamate 5-semialdehyde + NAD(+) + H2O = N-succinyl-L-glutamate + NADH + 2 H(+). The protein operates within amino-acid degradation; L-arginine degradation via AST pathway; L-glutamate and succinate from L-arginine: step 4/5. Catalyzes the NAD-dependent reduction of succinylglutamate semialdehyde into succinylglutamate. The polypeptide is N-succinylglutamate 5-semialdehyde dehydrogenase 1 (Shewanella denitrificans (strain OS217 / ATCC BAA-1090 / DSM 15013)).